Here is a 525-residue protein sequence, read N- to C-terminus: ATP synthase subunit beta, mitochondrial (525 aa).

A mitochondrion-targeting transit peptide spans 1 to 44; that stretch reads MLKKQALSGIRRFSLATKQSFVKTSYKLPRKSWLNTAKFNTIRY. 203-210 contributes to the ATP binding site; the sequence is GGAGVGKT.

This sequence belongs to the ATPase alpha/beta chains family. F-type ATPases have 2 components, CF(1) - the catalytic core - and CF(0) - the membrane proton channel. CF(1) has five subunits: alpha(3), beta(3), gamma(1), delta(1), epsilon(1). CF(0) has three main subunits: a, b and c.

Its subcellular location is the mitochondrion. It is found in the mitochondrion inner membrane. The catalysed reaction is ATP + H2O + 4 H(+)(in) = ADP + phosphate + 5 H(+)(out). Functionally, mitochondrial membrane ATP synthase (F(1)F(0) ATP synthase or Complex V) produces ATP from ADP in the presence of a proton gradient across the membrane which is generated by electron transport complexes of the respiratory chain. F-type ATPases consist of two structural domains, F(1) - containing the extramembraneous catalytic core, and F(0) - containing the membrane proton channel, linked together by a central stalk and a peripheral stalk. During catalysis, ATP synthesis in the catalytic domain of F(1) is coupled via a rotary mechanism of the central stalk subunits to proton translocation. Subunits alpha and beta form the catalytic core in F(1). Rotation of the central stalk against the surrounding alpha(3)beta(3) subunits leads to hydrolysis of ATP in three separate catalytic sites on the beta subunits. The sequence is that of ATP synthase subunit beta, mitochondrial (atp2) from Schizosaccharomyces pombe (strain 972 / ATCC 24843) (Fission yeast).